A 280-amino-acid polypeptide reads, in one-letter code: Undecaprenyl-diphosphatase (280 aa).

Helical transmembrane passes span 1 to 21 (MTIL…FLPV), 41 to 61 (FVRA…LVLY), 87 to 107 (FDLY…GFLF), 115 to 135 (LGSV…MLFV), 147 to 167 (ITYP…FLPG), 186 to 206 (KAAA…ATLL), 225 to 245 (IVLL…IKFF), and 260 to 280 (YRIL…SLAV).

It belongs to the UppP family.

The protein resides in the cell inner membrane. The catalysed reaction is di-trans,octa-cis-undecaprenyl diphosphate + H2O = di-trans,octa-cis-undecaprenyl phosphate + phosphate + H(+). Catalyzes the dephosphorylation of undecaprenyl diphosphate (UPP). Confers resistance to bacitracin. The chain is Undecaprenyl-diphosphatase from Porphyromonas gingivalis (strain ATCC 33277 / DSM 20709 / CIP 103683 / JCM 12257 / NCTC 11834 / 2561).